The primary structure comprises 56 residues: Ovomucoid (56 aa).

The region spanning 6–56 (VDCSDHPKPACLQEQKPLCGSDNKTYDNKCSFCNAVVDSNGTLTLSHFGKC) is the Kazal-like domain. Disulfide bonds link Cys-8/Cys-38, Cys-16/Cys-35, and Cys-24/Cys-56. N-linked (GlcNAc...) asparagine glycosylation occurs at Asn-45.

The protein resides in the secreted. The chain is Ovomucoid from Penelope jacquacu (Spix's guan).